Here is a 607-residue protein sequence, read N- to C-terminus: Dolichyl-diphosphooligosaccharide--protein glycosyltransferase subunit 1 (607 aa).

The first 23 residues, 1–23, serve as a signal peptide directing secretion; it reads MEAPAARLFLLLLLGTWAPAPGS. Residues 24 to 434 lie on the Lumenal side of the membrane; the sequence is ASSEAPPLIN…VVHYTFNKVL (411 aa). Position 187 is an N6-acetyllysine (Lys187). Residue Asn299 is glycosylated (N-linked (GlcNAc...) asparagine). A helical transmembrane segment spans residues 435-455; the sequence is MLQEPLLVVAAFYILFFTVII. Residues 456-607 are Cytoplasmic-facing; it reads YVRLDFSITK…TKIDHILDAL (152 aa). Lys538 is modified (N6-acetyllysine; alternate). A Glycyl lysine isopeptide (Lys-Gly) (interchain with G-Cter in SUMO2); alternate cross-link involves residue Lys538.

This sequence belongs to the OST1 family. Component of the oligosaccharyltransferase (OST) complex. OST exists in two different complex forms which contain common core subunits RPN1, RPN2, OST48, OST4, DAD1 and TMEM258, either STT3A or STT3B as catalytic subunits, and form-specific accessory subunits. STT3A complex assembly occurs through the formation of 3 subcomplexes. Subcomplex 1 contains RPN1 and TMEM258, subcomplex 2 contains the STT3A-specific subunits STT3A, DC2/OSTC, and KCP2 as well as the core subunit OST4, and subcomplex 3 contains RPN2, DAD1, and OST48. The STT3A complex can form stable complexes with the Sec61 complex or with both the Sec61 and TRAP complexes. Interacts with TMEM35A/NACHO. Ubiquitinated by the ECS(ASB11) complex. Post-translationally, ufmylated by UFL1 in response to endoplasmic reticulum stress, promoting reticulophagy of endoplasmic reticulum sheets.

It localises to the endoplasmic reticulum membrane. Its pathway is protein modification; protein glycosylation. Functionally, subunit of the oligosaccharyl transferase (OST) complex that catalyzes the initial transfer of a defined glycan (Glc(3)Man(9)GlcNAc(2) in eukaryotes) from the lipid carrier dolichol-pyrophosphate to an asparagine residue within an Asn-X-Ser/Thr consensus motif in nascent polypeptide chains, the first step in protein N-glycosylation. N-glycosylation occurs cotranslationally and the complex associates with the Sec61 complex at the channel-forming translocon complex that mediates protein translocation across the endoplasmic reticulum (ER). All subunits are required for a maximal enzyme activity. The sequence is that of Dolichyl-diphosphooligosaccharide--protein glycosyltransferase subunit 1 from Pongo abelii (Sumatran orangutan).